We begin with the raw amino-acid sequence, 365 residues long: Ferrochelatase (365 aa).

Residues H211 and E292 each contribute to the Fe cation site.

It belongs to the ferrochelatase family.

Its subcellular location is the cytoplasm. It carries out the reaction heme b + 2 H(+) = protoporphyrin IX + Fe(2+). It functions in the pathway porphyrin-containing compound metabolism; protoheme biosynthesis; protoheme from protoporphyrin-IX: step 1/1. Catalyzes the ferrous insertion into protoporphyrin IX. This chain is Ferrochelatase, found in Aromatoleum aromaticum (strain DSM 19018 / LMG 30748 / EbN1) (Azoarcus sp. (strain EbN1)).